The chain runs to 141 residues: Putative pre-16S rRNA nuclease (141 aa).

It belongs to the YqgF nuclease family.

The protein resides in the cytoplasm. Its function is as follows. Could be a nuclease involved in processing of the 5'-end of pre-16S rRNA. In Chlorobium luteolum (strain DSM 273 / BCRC 81028 / 2530) (Pelodictyon luteolum), this protein is Putative pre-16S rRNA nuclease.